A 440-amino-acid polypeptide reads, in one-letter code: Transposon Ty1-DR1 Gag polyprotein (440 aa).

Composition is skewed to polar residues over residues 1–10, 48–60, and 127–152; these read MESQQLSNYP, TKAN…TPAS, and QSQF…GNTF. Disordered stretches follow at residues 1 to 93, 126 to 173, and 352 to 440; these read MESQ…MMTQ, PQSQ…RPPP, and GSRN…PGTY. The span at 153–165 shows a compositional bias: low complexity; that stretch reads TDSSSADSDMTST. An RNA-binding region spans residues 299 to 401; it reads NNGIHINNKV…NSKSKTARAH (103 aa). Over residues 402–418 the composition is skewed to low complexity; the sequence is NVSTSNNSPSTDNDSIS. Serine 416 is subject to Phosphoserine. The segment covering 419 to 428 has biased composition (polar residues); sequence KSTTEPIQLN. Basic and acidic residues predominate over residues 429–440; it reads NKHDLHLRPGTY.

Homotrimer.

The protein localises to the cytoplasm. Its function is as follows. Capsid protein (CA) is the structural component of the virus-like particle (VLP), forming the shell that encapsulates the retrotransposons dimeric RNA genome. The particles are assembled from trimer-clustered units and there are holes in the capsid shells that allow for the diffusion of macromolecules. CA also has nucleocapsid-like chaperone activity, promoting primer tRNA(i)-Met annealing to the multipartite primer-binding site (PBS), dimerization of Ty1 RNA and initiation of reverse transcription. In Saccharomyces cerevisiae (strain ATCC 204508 / S288c) (Baker's yeast), this protein is Transposon Ty1-DR1 Gag polyprotein (TY1A-DR1).